A 685-amino-acid polypeptide reads, in one-letter code: Phenoloxidase subunit 1 (685 aa).

Residues 1–51 (MSDAKNNLLLFFDRPSEPCFMQKGEENAVFEIPDNYYPEKYQRVSNAIGNR) constitute a propeptide that is removed on maturation. Asn184 is a glycosylation site (N-linked (GlcNAc...) asparagine). Residues His209, His213, and His239 each coordinate Cu cation. Residues Asn254 and Asn324 are each glycosylated (N-linked (GlcNAc...) asparagine). Glu351 functions as the Proton acceptor in the catalytic mechanism. Residues His366, His370, and His406 each contribute to the Cu cation site. N-linked (GlcNAc...) asparagine glycans are attached at residues Asn491 and Asn540. Disulfide bonds link Cys581–Cys623 and Cys583–Cys630.

As to quaternary structure, heterodimer. Cu(2+) serves as cofactor. In terms of processing, the N-terminus is blocked. As to expression, synthesized by hemocytes and released into the hemolymph plasma.

Its subcellular location is the secreted. The catalysed reaction is 2 L-dopa + O2 = 2 L-dopaquinone + 2 H2O. It catalyses the reaction L-tyrosine + O2 = L-dopaquinone + H2O. In terms of biological role, this is a copper-containing oxidase that functions in the formation of pigments such as melanins and other polyphenolic compounds. Catalyzes the rate-limiting conversions of tyrosine to DOPA, DOPA to DOPA-quinone and possibly 5,6 dihydroxyindole to indole-5'6 quinone. This Bombyx mori (Silk moth) protein is Phenoloxidase subunit 1.